A 653-amino-acid polypeptide reads, in one-letter code: Structural protein ORF653 (653 aa).

Residues 300–330 adopt a coiled-coil conformation; the sequence is AKEETKQETKQETGKEEEEKKETKQESQEQL. A compositionally biased stretch (basic and acidic residues) spans 302-326; the sequence is EETKQETKQETGKEEEEKKETKQES. Disordered stretches follow at residues 302-329, 344-388, and 626-653; these read EETK…SQEQ, GQPA…ENTP, and AGQQ…VKLS. A compositionally biased stretch (low complexity) spans 371-381; that stretch reads EENNAEAPQQR. Residues 505-649 are a coiled coil; that stretch reads KEQELYKELD…EEEEEEGNDT (145 aa). Acidic residues predominate over residues 630–647; the sequence is EETDETTEEEEEEEEEGN.

The protein resides in the virion. The polypeptide is Structural protein ORF653 (Acidianus two-tailed virus (ATV)).